The sequence spans 144 residues: Augurin-B (144 aa).

The N-terminal stretch at 1-18 is a signal peptide; that stretch reads MSLHSLCVPTILLISVLS. A propeptide spanning residues 19–68 is cleaved from the precursor; the sequence is ICLSSGGSSDSKLHRILIKRDAKEIESRPKAYISVQQSKAKEFLSGLHRT. The disordered stretch occupies residues 109–144; that stretch reads RSNDQGRQHHHDENAPMSQQDPRYNRHGANVNYDYY. Over residues 112-122 the composition is skewed to basic and acidic residues; sequence DQGRQHHHDEN.

It belongs to the augurin family.

Its subcellular location is the secreted. It is found in the cytoplasm. It localises to the apical cell membrane. Functionally, probable hormone. Required for the proper formation of the central nervous system by attenuating cell proliferation during development. The polypeptide is Augurin-B (Danio rerio (Zebrafish)).